A 232-amino-acid polypeptide reads, in one-letter code: 2,3-bisphosphoglycerate-dependent phosphoglycerate mutase 1 (232 aa).

Substrate contacts are provided by residues arginine 8–asparagine 15, threonine 21–glycine 22, arginine 58, glutamate 114–tyrosine 117, lysine 125, arginine 141–arginine 142, and glycine 185–asparagine 186. The active-site Tele-phosphohistidine intermediate is histidine 9. The Proton donor/acceptor role is filled by glutamate 114.

This sequence belongs to the phosphoglycerate mutase family. BPG-dependent PGAM subfamily.

It catalyses the reaction (2R)-2-phosphoglycerate = (2R)-3-phosphoglycerate. It participates in carbohydrate degradation; glycolysis; pyruvate from D-glyceraldehyde 3-phosphate: step 3/5. Its function is as follows. Catalyzes the interconversion of 2-phosphoglycerate and 3-phosphoglycerate. In Gloeobacter violaceus (strain ATCC 29082 / PCC 7421), this protein is 2,3-bisphosphoglycerate-dependent phosphoglycerate mutase 1.